Reading from the N-terminus, the 309-residue chain is Taste receptor type 2 member 45 (309 aa).

Residue Met1 is a topological domain, extracellular. A helical membrane pass occupies residues 2-22; that stretch reads ITFLPIIFSILVVVTFVIGNF. The Cytoplasmic portion of the chain corresponds to 23–55; that stretch reads ANGFIALVNSTEWVKRQKISFADQIVTALAVSR. A helical transmembrane segment spans residues 56-76; sequence VGLLWVLLLNWYSTVLNPAFY. The Extracellular portion of the chain corresponds to 77–98; the sequence is SVELRTTAYNIWAVTGHFSNWL. A helical transmembrane segment spans residues 99–119; the sequence is ATSLSIFYLLKIANFSNLIFL. Residues 120 to 126 lie on the Cytoplasmic side of the membrane; that stretch reads HLKRRVK. Residues 127-147 traverse the membrane as a helical segment; that stretch reads SVILVMLLGPLLFLACHLFVV. At 148–178 the chain is on the extracellular side; sequence NMNQIVWTKEYEGNMTWKIKLRRAMYLSDTT. Asn161 is a glycosylation site (N-linked (GlcNAc...) asparagine). A helical membrane pass occupies residues 179 to 199; sequence VTMLANLVPFTVTLISFLLLV. At 200-229 the chain is on the cytoplasmic side; the sequence is CSLCEHLKKMQLHGKGSQDPSTKVHIKALQ. A helical transmembrane segment spans residues 230–250; it reads TVISFLLLCAIYFVSVIISVW. Residues 251–259 are Extracellular-facing; it reads SFKNLENKP. A helical transmembrane segment spans residues 260 to 280; that stretch reads VFMFCQAIGFSCSSAHPFILI. Residues 281-309 lie on the Cytoplasmic side of the membrane; the sequence is WGNKKLKQPFLSVLWQMRYWVKGEKPSSS.

The protein belongs to the G-protein coupled receptor T2R family.

It is found in the membrane. Its function is as follows. Receptor that may play a role in the perception of bitterness and is gustducin-linked. May play a role in sensing the chemical composition of the gastrointestinal content. The activity of this receptor may stimulate alpha gustducin, mediate PLC-beta-2 activation and lead to the gating of TRPM5. In Pan paniscus (Pygmy chimpanzee), this protein is Taste receptor type 2 member 45 (TAS2R45).